A 510-amino-acid chain; its full sequence is Adenosine deaminase 2 (510 aa).

Positions 1-24 are cleaved as a signal peptide; sequence MSGWPVLPALLLAVAMSSFHSATS. Residues 25–95 are dimerization; that stretch reads RDEERNRLLM…GLMEKSAVFN (71 aa). Zn(2+) is bound by residues His-107 and His-109. Substrate is bound at residue Asp-110. A glycan (N-linked (GlcNAc...) asparagine) is linked at Asn-122. Positions 122-182 are PRB domain; it reads NATYRPYCYF…TEFDNSLLRT (61 aa). A disulfide bridge connects residues Cys-132 and Cys-156. Residue Asn-171 is glycosylated (N-linked (GlcNAc...) asparagine). Residues 201–208, His-290, and Gly-323 contribute to the substrate site; that span reads WKKFKTIF. Zn(2+) is bound at residue His-353. Catalysis depends on Glu-356, which acts as the Proton donor. N-linked (GlcNAc...) asparagine glycosylation is present at Asn-375. Catalysis depends on His-381, which acts as the Proton acceptor. Asp-438 serves as a coordination point for Zn(2+). A substrate-binding site is contributed by Asp-439.

Belongs to the metallo-dependent hydrolases superfamily. Adenosine and AMP deaminases family. ADGF subfamily. As to quaternary structure, homodimer. Interacts with adenosine receptors. Binds heparin. Zn(2+) is required as a cofactor.

The protein resides in the secreted. The catalysed reaction is adenosine + H2O + H(+) = inosine + NH4(+). Its function is as follows. Adenosine deaminase that may contribute to the degradation of extracellular adenosine, a signaling molecule that controls a variety of cellular responses. Requires elevated adenosine levels for optimal enzyme activity. Binds to cell surfaces via proteoglycans and may play a role in the regulation of cell proliferation and differentiation, independently of its enzyme activity. This is Adenosine deaminase 2 from Sus scrofa (Pig).